Reading from the N-terminus, the 191-residue chain is Calcium-activated potassium channel subunit beta-1 (191 aa).

At 1–15 (MGKKLVMAQKRGETR) the chain is on the cytoplasmic side. The helical transmembrane segment at 16-36 (ALCLGVAMVMCAVITYYILGT) threads the bilayer. Topologically, residues 37–157 (TMLPLYQKSV…YQRLYGPQAL (121 aa)) are extracellular. N-linked (GlcNAc...) asparagine glycans are attached at residues Asn80 and Asn142. The chain crosses the membrane as a helical span at residues 158-178 (LASLFWPTFLLTGGLLIIAMV). Topologically, residues 179–191 (KINRSLSILAAQK) are cytoplasmic.

The protein belongs to the KCNMB (TC 8.A.14.1) family. KCNMB1 subfamily. As to quaternary structure, interacts with KCNMA1 tetramer. There are probably 4 molecules of KCMNB1 per KCNMA1 tetramer. N-glycosylated.

The protein localises to the membrane. Functionally, regulatory subunit of the calcium activated potassium KCNMA1 (maxiK) channel. Modulates the calcium sensitivity and gating kinetics of KCNMA1, thereby contributing to KCNMA1 channel diversity. Increases the apparent Ca(2+)/voltage sensitivity of the KCNMA1 channel. It also modifies KCNMA1 channel kinetics and alters its pharmacological properties. It slows down the activation and the deactivation kinetics of the channel. Acts as a negative regulator of smooth muscle contraction by enhancing the calcium sensitivity to KCNMA1. Its presence is also a requirement for internal binding of the KCNMA1 channel opener dehydrosoyasaponin I (DHS-1) triterpene glycoside and for external binding of the agonist hormone 17-beta-estradiol (E2). Increases the binding activity of charybdotoxin (CTX) toxin to KCNMA1 peptide blocker by increasing the CTX association rate and decreasing the dissociation rate. The protein is Calcium-activated potassium channel subunit beta-1 (KCNMB1) of Oryctolagus cuniculus (Rabbit).